The sequence spans 485 residues: Fumarate hydratase, mitochondrial (485 aa).

Residues 1-19 (MLSASRKLNNQQFLKTIRN) constitute a mitochondrion transit peptide. Substrate contacts are provided by residues 118–120 (SGT), 150–153 (HPND), 160–162 (SSN), and Thr208. The active-site Proton donor/acceptor is His209. The active site involves Ser339. Residues Ser340 and 345–347 (KVN) each bind substrate.

The protein belongs to the class-II fumarase/aspartase family. Fumarase subfamily. In terms of assembly, homotetramer.

It localises to the mitochondrion. The protein localises to the cytoplasm. The catalysed reaction is (S)-malate = fumarate + H2O. It functions in the pathway carbohydrate metabolism; tricarboxylic acid cycle; (S)-malate from fumarate: step 1/1. Its function is as follows. Catalyzes the reversible stereospecific interconversion of fumarate to L-malate. In terms of biological role, catalyzes the hydration of fumarate to L-malate in the tricarboxylic acid (TCA) cycle to facilitate a transition step in the production of energy in the form of NADH. The polypeptide is Fumarate hydratase, mitochondrial (Dictyostelium discoideum (Social amoeba)).